A 398-amino-acid chain; its full sequence is S-adenosylmethionine synthase (398 aa).

H16 provides a ligand contact to ATP. D18 is a binding site for Mg(2+). E51 contributes to the K(+) binding site. The L-methionine site is built by E64 and Q108. Residues 108–118 are flexible loop; the sequence is QSADIAQGVDA. Residues 176 to 178, 242 to 243, D251, 257 to 258, A274, and K278 each bind ATP; these read DSK, KF, and RK. Position 251 (D251) interacts with L-methionine. K282 is an L-methionine binding site.

The protein belongs to the AdoMet synthase family. Homotetramer; dimer of dimers. Mg(2+) is required as a cofactor. Requires K(+) as cofactor.

The protein resides in the cytoplasm. The enzyme catalyses L-methionine + ATP + H2O = S-adenosyl-L-methionine + phosphate + diphosphate. It functions in the pathway amino-acid biosynthesis; S-adenosyl-L-methionine biosynthesis; S-adenosyl-L-methionine from L-methionine: step 1/1. Functionally, catalyzes the formation of S-adenosylmethionine (AdoMet) from methionine and ATP. The overall synthetic reaction is composed of two sequential steps, AdoMet formation and the subsequent tripolyphosphate hydrolysis which occurs prior to release of AdoMet from the enzyme. This Bradyrhizobium diazoefficiens (strain JCM 10833 / BCRC 13528 / IAM 13628 / NBRC 14792 / USDA 110) protein is S-adenosylmethionine synthase.